Here is a 195-residue protein sequence, read N- to C-terminus: Shikimate kinase (195 aa).

Residue 31 to 36 (GAGKSC) participates in ATP binding. Residue Ser35 coordinates Mg(2+). Substrate is bound by residues Asp53, Arg77, and Gly99. Residue Arg137 participates in ATP binding. Arg156 serves as a coordination point for substrate.

It belongs to the shikimate kinase family. In terms of assembly, monomer. Mg(2+) serves as cofactor.

It localises to the cytoplasm. It carries out the reaction shikimate + ATP = 3-phosphoshikimate + ADP + H(+). It participates in metabolic intermediate biosynthesis; chorismate biosynthesis; chorismate from D-erythrose 4-phosphate and phosphoenolpyruvate: step 5/7. Catalyzes the specific phosphorylation of the 3-hydroxyl group of shikimic acid using ATP as a cosubstrate. The chain is Shikimate kinase from Paramagnetospirillum magneticum (strain ATCC 700264 / AMB-1) (Magnetospirillum magneticum).